Reading from the N-terminus, the 1551-residue chain is Transient receptor potential cation channel subfamily M member-like 2 (1551 aa).

At 1–714 (MGKDSFTPLY…WMGTMAMNTR (714 aa)) the chain is on the cytoplasmic side. An intramembrane segment occupies 715-730 (WWKVLVCLYLPVLIFP). The Cytoplasmic segment spans residues 731–837 (IIYFVPDEQH…DRIMHFYSAP (107 aa)). Residues 744 to 767 (AAEREHQKSLNQKSSKVKSHKEKN) are disordered. A helical transmembrane segment spans residues 838-858 (FSKFVGNVVGYLAFIFLYAYV). Residues 859-877 (VLFNFPRFDPAKTLGGIHP) are Extracellular-facing. Residues 878 to 898 (TEIVLYFWVFTILIEEIRQLA) traverse the membrane as a helical segment. Ca(2+)-binding residues include Glu-893 and Gln-896. Residues 899–916 (AKPPKYIKDKVSVYFSDT) are Cytoplasmic-facing. A helical transmembrane segment spans residues 917-937 (WNFVDIFSLTVFIIAIILRFF). Ca(2+) contacts are provided by Asn-918 and Asp-921. Topologically, residues 938–947 (TNSRIFTASR) are extracellular. The helical transmembrane segment at 948–968 (IILSLDIIFFIVRSLQIFSVN) threads the bilayer. Topologically, residues 969-980 (RLLGPKLVMIQK) are cytoplasmic. A helical membrane pass occupies residues 981 to 1001 (MMQDLAQFIIILAVFTIAYGI). At 1002-1018 (ALHAVMFPSPGIYARNN) the chain is on the extracellular side. N-linked (GlcNAc...) asparagine glycosylation occurs at Asn-1017. The segment at residues 1019-1034 (TWVTITSVVQYPYWQM) is an intramembrane region (pore-forming). Residues 1035–1037 (YGE) carry the Selectivity filter motif. The Extracellular segment spans residues 1035–1059 (YGELFLDEIQGEKPKEFGEVDPDGR). The short motif at 1040 to 1042 (LDE) is the Prevents fast channel inactivation element. Residues 1060–1080 (WLSPLLLAIYMVFTNILLLNL) form a helical membrane-spanning segment. At 1081 to 1116 (LIAIFNYTFERVQEDSDKVWKFQRYDLVQEYHSRPV) the chain is on the cytoplasmic side. An intramembrane segment occupies 1117-1135 (FAPPLVLLGHILIFIRWVW). At 1136 to 1551 (RMCRCGHPPR…KVAKMRDAAF (416 aa)) the chain is on the cytoplasmic side. The stretch at 1184–1209 (LEERVRALGDRVDCINSQLNRVLDSM) forms a coiled coil. The region spanning 1394–1546 (WKRTSAGVML…VSILEKVAKM (153 aa)) is the Nudix hydrolase domain. A Nudix box motif is present at residues 1428–1449 (GMVEPGQLVTQALKAEFGEEAM).

This sequence belongs to the transient receptor (TC 1.A.4) family. LTrpC subfamily. TRPM2 sub-subfamily. As to quaternary structure, homotetramer.

Its subcellular location is the cell membrane. Its activity is regulated as follows. Activated by phosphatidylinositol 4,5-bisphosphate (PIP2). Although PIP2 is essential for the channel activation, its contribution to the level of channel activity is minimal. Also activated by diphosphate ribose-2'-phosphate. Upon binding to ADPR, channel activation requires only a short initial cytosolic Ca(2+) increase, then the activation is sustained by the uptake of extracellular Ca(2+). Activated by 2-aminoethyl diphenylborinate (2-APB) in a Ca(2+)-dependent manner. 2-APB prevents the inactivation of the channel. Nonselective, voltage-independent cation channel that mediates Ca(2+) and to a lesser extent Na(+) influx, leading to increased cytoplasmic Ca(2+) levels. Functions as a ligand-gated ion channel. Binding of ADP-ribose causes a conformation change; the channel is primed but still requires Ca(2+) binding to trigger channel opening. May have ADP-ribose pyrophosphatase activity which reduces ADP-ribose levels induced by oxidative stress, thus preventing the channel activation by reactive oxygen species. The protein is Transient receptor potential cation channel subfamily M member-like 2 of Nematostella vectensis (Starlet sea anemone).